We begin with the raw amino-acid sequence, 195 residues long: Large ribosomal subunit protein bL25 (195 aa).

It belongs to the bacterial ribosomal protein bL25 family. CTC subfamily. Part of the 50S ribosomal subunit; part of the 5S rRNA/L5/L18/L25 subcomplex. Contacts the 5S rRNA. Binds to the 5S rRNA independently of L5 and L18.

This is one of the proteins that binds to the 5S RNA in the ribosome where it forms part of the central protuberance. The polypeptide is Large ribosomal subunit protein bL25 (Chlorobium chlorochromatii (strain CaD3)).